Here is a 940-residue protein sequence, read N- to C-terminus: BTB/POZ domain-containing protein FBL11 (940 aa).

The 69-residue stretch at 41–109 (WDMSEILSYG…LYGYDIEITS (69 aa)) folds into the BTB domain. A BACK domain is found at 155–258 (IQIWSFGLEH…FSLLPLWFIA (104 aa)).

It functions in the pathway protein modification; protein ubiquitination. May act as a substrate-specific adapter of an E3 ubiquitin-protein ligase complex (CUL3-RBX1-BTB) which mediates the ubiquitination and subsequent proteasomal degradation of target proteins. This is BTB/POZ domain-containing protein FBL11 (FBL11) from Arabidopsis thaliana (Mouse-ear cress).